A 766-amino-acid polypeptide reads, in one-letter code: Tripartite terminase subunit 1 (766 aa).

Residues 191–219 (CSVCFEELCVTANQGEAVHRRLLECTCDH) form a C3H1-type zinc finger. Residue 683–690 (FSSVFHCG) coordinates ATP.

This sequence belongs to the herpesviridae TRM1 protein family. As to quaternary structure, associates with TRM2 and TRM3 to form the tripartite terminase complex. Interacts with portal protein.

It is found in the host nucleus. In terms of biological role, component of the molecular motor that translocates viral genomic DNA in empty capsid during DNA packaging. Forms a tripartite terminase complex together with TRM2 and TRM3 in the host cytoplasm. Once the complex reaches the host nucleus, it interacts with the capsid portal vertex. This portal forms a ring in which genomic DNA is translocated into the capsid. TRM1 carries an endonuclease activity that plays an important role for the cleavage of concatemeric viral DNA into unit length genomes. In Equus caballus (Horse), this protein is Tripartite terminase subunit 1.